We begin with the raw amino-acid sequence, 346 residues long: Golgi-associated RAB2 interactor protein 2 (346 aa).

The interval 275–346 is disordered; that stretch reads TPVESEANTS…EKHVRQPKDF (72 aa). 2 stretches are compositionally biased toward basic and acidic residues: residues 283-297 and 334-346; these read TSKE…EKTP and KLVE…PKDF.

The protein belongs to the GARIN family. As to quaternary structure, interacts with CALM1.

Its subcellular location is the cell projection. The protein resides in the cilium. It localises to the flagellum. Its function is as follows. Seems to play a role in sperm motility. The chain is Golgi-associated RAB2 interactor protein 2 (GARIN2) from Macaca fascicularis (Crab-eating macaque).